A 456-amino-acid polypeptide reads, in one-letter code: tRNA modification GTPase MnmE (456 aa).

Residues Arg25, Glu82, and Lys121 each contribute to the (6S)-5-formyl-5,6,7,8-tetrahydrofolate site. The TrmE-type G domain maps to 217-379 (GMKVVIAGRP…LKAHLKSVMG (163 aa)). Asn227 contacts K(+). GTP contacts are provided by residues 227–232 (NAGKSS), 246–252 (TNIAGTT), and 271–274 (DTAG). Ser231 serves as a coordination point for Mg(2+). Residues Thr246, Ile248, and Thr251 each contribute to the K(+) site. Thr252 serves as a coordination point for Mg(2+). Position 456 (Lys456) interacts with (6S)-5-formyl-5,6,7,8-tetrahydrofolate.

Belongs to the TRAFAC class TrmE-Era-EngA-EngB-Septin-like GTPase superfamily. TrmE GTPase family. As to quaternary structure, homodimer. Heterotetramer of two MnmE and two MnmG subunits. K(+) is required as a cofactor.

It is found in the cytoplasm. In terms of biological role, exhibits a very high intrinsic GTPase hydrolysis rate. Involved in the addition of a carboxymethylaminomethyl (cmnm) group at the wobble position (U34) of certain tRNAs, forming tRNA-cmnm(5)s(2)U34. The sequence is that of tRNA modification GTPase MnmE from Saccharophagus degradans (strain 2-40 / ATCC 43961 / DSM 17024).